Here is a 144-residue protein sequence, read N- to C-terminus: D-aminoacyl-tRNA deacylase (144 aa).

Positions 136–137 match the Gly-cisPro motif, important for rejection of L-amino acids motif; it reads GP.

The protein belongs to the DTD family. Homodimer.

It is found in the cytoplasm. The enzyme catalyses glycyl-tRNA(Ala) + H2O = tRNA(Ala) + glycine + H(+). The catalysed reaction is a D-aminoacyl-tRNA + H2O = a tRNA + a D-alpha-amino acid + H(+). Functionally, an aminoacyl-tRNA editing enzyme that deacylates mischarged D-aminoacyl-tRNAs. Also deacylates mischarged glycyl-tRNA(Ala), protecting cells against glycine mischarging by AlaRS. Acts via tRNA-based rather than protein-based catalysis; rejects L-amino acids rather than detecting D-amino acids in the active site. By recycling D-aminoacyl-tRNA to D-amino acids and free tRNA molecules, this enzyme counteracts the toxicity associated with the formation of D-aminoacyl-tRNA entities in vivo and helps enforce protein L-homochirality. The chain is D-aminoacyl-tRNA deacylase from Haemophilus influenzae (strain 86-028NP).